Here is a 589-residue protein sequence, read N- to C-terminus: Ectoderm-neural cortex protein 1 (589 aa).

The BTB domain maps to 46 to 114; that stretch reads TDVLLHAGNR…AYSSRVIINE (69 aa). Kelch repeat units follow at residues 296–340, 341–388, 389–444, 446–492, 494–538, and 539–585; these read ALFL…AIGC, KVYI…ELKH, CLYV…SAKL, LFAF…VLGN, IFIM…ASGN, and KLYV…STWK.

In terms of assembly, binds to RB1. Hypophosphorylated RB1 associates with ENC1 during neuronal differentiation, while hyperphosphorylated RB1 associates with ENC1 in undifferentiating cells. Part of a complex that contains CUL3, RBX1 and ENC1. Interacts indirectly with KEAP1. In terms of processing, ubiquitinated by E3 ubiquitin ligase complex formed by CUL3 and RBX1 and probably targeted for proteasome-independent degradation. Quinone-induced oxidative stress increases its ubiquitination. Detected in fetal brain tissue, moderate expression in fetal heart, lung and kidney. Highly expressed in adult brain, particularly high in the hippocampus and amygdala, and spinal cord. Detectable in adult pancreas. May be down-regulated in neuroblastoma tumors.

It is found in the nucleus matrix. The protein resides in the cytoplasm. The protein localises to the cytoskeleton. Functionally, actin-binding protein involved in the regulation of neuronal process formation and in differentiation of neural crest cells. Down-regulates transcription factor NF2L2/NRF2 by decreasing the rate of protein synthesis and not via a ubiquitin-mediated proteasomal degradation mechanism. This is Ectoderm-neural cortex protein 1 (ENC1) from Homo sapiens (Human).